The following is a 2324-amino-acid chain: Serine/threonine-protein kinase MEC1 (2324 aa).

The FAT domain occupies 1349–1901; that stretch reads VLAQKSLETN…LWYITVLLNS (553 aa). Residues 2005–2308 form the PI3K/PI4K catalytic domain; sequence FTPHYKVYSS…QVDTVVQQAS (304 aa). Positions 2011–2017 are G-loop; the sequence is VYSSLKK. The catalytic loop stretch occupies residues 2177–2185; that stretch reads GLGDRHLEN. The activation loop stretch occupies residues 2197 to 2221; it reads HVDFDCLFEKGKTLPVPEIVPFRLT. The FATC domain occupies 2292–2324; it reads LPLSVPGQVDTVVQQASSDENLAQMYIGWLPFW.

The protein belongs to the PI3/PI4-kinase family. ATM subfamily.

It is found in the nucleus. It carries out the reaction L-seryl-[protein] + ATP = O-phospho-L-seryl-[protein] + ADP + H(+). The catalysed reaction is L-threonyl-[protein] + ATP = O-phospho-L-threonyl-[protein] + ADP + H(+). Functionally, serine/threonine protein kinase which activates checkpoint signaling upon genotoxic stresses such as ionizing radiation (IR), ultraviolet light (UV), or DNA replication stalling, thereby acting as a DNA damage sensor. Recognizes the substrate consensus sequence [ST]-Q. Recruited to DNA lesions in order to initiate the DNA repair by homologous recombination. Phosphorylates histone H2A to form H2AS128ph (gamma-H2A) at sites of DNA damage, also involved in the regulation of DNA damage response mechanism. Required for cell growth and meiotic recombination. The polypeptide is Serine/threonine-protein kinase MEC1 (MEC1) (Eremothecium gossypii (strain ATCC 10895 / CBS 109.51 / FGSC 9923 / NRRL Y-1056) (Yeast)).